Here is a 112-residue protein sequence, read N- to C-terminus: ATP synthase epsilon chain (112 aa).

Belongs to the ATPase epsilon chain family. As to quaternary structure, F-type ATPases have 2 components, CF(1) - the catalytic core - and CF(0) - the membrane proton channel. CF(1) has five subunits: alpha(3), beta(3), gamma(1), delta(1), epsilon(1). CF(0) has three main subunits: a, b and c.

It is found in the cell membrane. Functionally, produces ATP from ADP in the presence of a proton gradient across the membrane. This is ATP synthase epsilon chain from Rickettsia africae (strain ESF-5).